Here is a 230-residue protein sequence, read N- to C-terminus: Cell division ATP-binding protein FtsE (230 aa).

The 226-residue stretch at 4-229 folds into the ABC transporter domain; sequence IEMRDVVKKY…DESKGEYGYD (226 aa). 37–44 provides a ligand contact to ATP; the sequence is GPSGAGKS.

The protein belongs to the ABC transporter superfamily. In terms of assembly, homodimer. Interacts with FtsX; forms a membrane-associated complex. Interacts with pcsB.

The protein localises to the cell membrane. The enzyme catalyses ATP + H2O = ADP + phosphate + H(+). Functionally, part of the ABC transporter FtsEX involved in cellular division. Has ATPase activity. Essential for cell division and viability. This Streptococcus pneumoniae serotype 2 (strain D39 / NCTC 7466) protein is Cell division ATP-binding protein FtsE.